The following is a 404-amino-acid chain: Formate-dependent phosphoribosylglycinamide formyltransferase (404 aa).

N(1)-(5-phospho-beta-D-ribosyl)glycinamide contacts are provided by residues Glu25–Leu26 and Glu85. Residues Arg118, Lys159, Ser164 to Gln169, Glu199 to Ile202, and Glu207 each bind ATP. An ATP-grasp domain is found at Arg123–Leu318. Residues Glu277 and Glu289 each contribute to the Mg(2+) site. N(1)-(5-phospho-beta-D-ribosyl)glycinamide-binding positions include Asp296, Lys365, and Arg372–Arg373.

This sequence belongs to the PurK/PurT family. In terms of assembly, homodimer.

The enzyme catalyses N(1)-(5-phospho-beta-D-ribosyl)glycinamide + formate + ATP = N(2)-formyl-N(1)-(5-phospho-beta-D-ribosyl)glycinamide + ADP + phosphate + H(+). It functions in the pathway purine metabolism; IMP biosynthesis via de novo pathway; N(2)-formyl-N(1)-(5-phospho-D-ribosyl)glycinamide from N(1)-(5-phospho-D-ribosyl)glycinamide (formate route): step 1/1. Involved in the de novo purine biosynthesis. Catalyzes the transfer of formate to 5-phospho-ribosyl-glycinamide (GAR), producing 5-phospho-ribosyl-N-formylglycinamide (FGAR). Formate is provided by PurU via hydrolysis of 10-formyl-tetrahydrofolate. The chain is Formate-dependent phosphoribosylglycinamide formyltransferase from Burkholderia pseudomallei (strain 668).